Reading from the N-terminus, the 224-residue chain is Glutathione S-transferase U1 (224 aa).

The GST N-terminal domain maps to 6 to 85; that stretch reads ESVKLLGFWA…YIDQTWKNSP (80 aa). Glutathione is bound by residues 16 to 17, 42 to 43, 56 to 57, and 69 to 70; these read SP, NK, KV, and ES. Positions 90-217 constitute a GST C-terminal domain; the sequence is DPYEKAMARF…EKQIERMTKI (128 aa). Phosphothreonine is present on T151.

This sequence belongs to the GST superfamily. Tau family.

Its subcellular location is the cytoplasm. It is found in the cytosol. The enzyme catalyses RX + glutathione = an S-substituted glutathione + a halide anion + H(+). Functionally, may be involved in the conjugation of reduced glutathione to a wide number of exogenous and endogenous hydrophobic electrophiles and have a detoxification role against certain herbicides. The polypeptide is Glutathione S-transferase U1 (GSTU1) (Arabidopsis thaliana (Mouse-ear cress)).